Here is a 519-residue protein sequence, read N- to C-terminus: Mannuronan C5-epimerase (519 aa).

A signal peptide spans 1–25 (MNLHPHLRHSLLASALLLASGLATA). PbH1 repeat units follow at residues 219–246 (GTET…SISQ), 281–303 (TQDF…DPHD), 305–328 (SHRL…IVSR), 330–352 (VNDS…VIDR), 354–376 (SVNN…TLYE), and 377–399 (SGDN…RVRN). The Proton acceptor role is filled by histidine 302.

It belongs to the D-mannuronate C5-epimerase family.

It is found in the periplasm. It catalyses the reaction [(1-&gt;4)-beta-D-mannuronosyl](n) = [alginate](n). The protein operates within glycan biosynthesis; alginate biosynthesis. In terms of biological role, catalyzes the epimerization of beta-D-mannuronate to alpha-L-guluronate during the synthesis of the linear polysaccharide alginate. In addition, is part of a periplasmic protein complex that protects alginate from degradation by AlgL by channeling the newly formed alginate polymer through a scaffold that transfers the alginate polymer through the periplasmic space to the outer membrane secretin AlgE. The polypeptide is Mannuronan C5-epimerase (algG) (Pseudomonas putida (strain ATCC 47054 / DSM 6125 / CFBP 8728 / NCIMB 11950 / KT2440)).